Here is a 72-residue protein sequence, read N- to C-terminus: DNA-directed RNA polymerase subunit Rpo10 (72 aa).

Positions 7, 10, 54, and 55 each coordinate Zn(2+).

The protein belongs to the archaeal Rpo10/eukaryotic RPB10 RNA polymerase subunit family. As to quaternary structure, part of the RNA polymerase complex. The cofactor is Zn(2+).

The protein localises to the cytoplasm. The enzyme catalyses RNA(n) + a ribonucleoside 5'-triphosphate = RNA(n+1) + diphosphate. Its function is as follows. DNA-dependent RNA polymerase (RNAP) catalyzes the transcription of DNA into RNA using the four ribonucleoside triphosphates as substrates. This is DNA-directed RNA polymerase subunit Rpo10 from Picrophilus torridus (strain ATCC 700027 / DSM 9790 / JCM 10055 / NBRC 100828 / KAW 2/3).